A 357-amino-acid chain; its full sequence is Protein-glutamate methylesterase/protein-glutamine glutaminase 1 (357 aa).

Positions Arg7–Ile125 constitute a Response regulatory domain. Asp58 is subject to 4-aspartylphosphate. The CheB-type methylesterase domain occupies Lys162–Ile344. Catalysis depends on residues Ser174, His201, and Asp297.

Belongs to the CheB family. Phosphorylated by CheA. Phosphorylation of the N-terminal regulatory domain activates the methylesterase activity.

The protein resides in the cytoplasm. It catalyses the reaction [protein]-L-glutamate 5-O-methyl ester + H2O = L-glutamyl-[protein] + methanol + H(+). It carries out the reaction L-glutaminyl-[protein] + H2O = L-glutamyl-[protein] + NH4(+). Involved in chemotaxis. Part of a chemotaxis signal transduction system that modulates chemotaxis in response to various stimuli. Catalyzes the demethylation of specific methylglutamate residues introduced into the chemoreceptors (methyl-accepting chemotaxis proteins or MCP) by CheR. Also mediates the irreversible deamidation of specific glutamine residues to glutamic acid. This Leptospira interrogans serogroup Icterohaemorrhagiae serovar Lai (strain 56601) protein is Protein-glutamate methylesterase/protein-glutamine glutaminase 1.